The chain runs to 89 residues: FMRFamide-like neuropeptides 19 (89 aa).

The signal sequence occupies residues 1–20; sequence MSFQLTLFSMLFLLIAVVVG. Residues 21-67 constitute a propeptide that is removed on maturation; that stretch reads QPIQSQNGDLKMQAVQDNSPLNMEAFNDDSALYDYLEQSDPSLKSME. Phenylalanine 76 is modified (phenylalanine amide). A propeptide spanning residues 80–89 is cleaved from the precursor; the sequence is ASWASSVRFG.

The protein belongs to the FARP (FMRFamide related peptide) family. Each flp gene is expressed in a distinct set of neurons. Flp-19 is expressed in the URX interneurons, the serotonin and acetylcholine-expressing HSN neurons, and the AIN, AWA and BAG neurons.

It localises to the secreted. Its function is as follows. FMRFamides and FMRFamide-like peptides are neuropeptides. WANQVRF-amide inhibits the activity of dissected pharyngeal myogenic muscle system. The sequence is that of FMRFamide-like neuropeptides 19 from Caenorhabditis elegans.